We begin with the raw amino-acid sequence, 341 residues long: tRNA N6-adenosine threonylcarbamoyltransferase (341 aa).

Fe cation is bound by residues histidine 111 and histidine 115. Substrate is bound by residues 134-138 (LVSGG), aspartate 167, glycine 180, and asparagine 276. Position 304 (aspartate 304) interacts with Fe cation.

Belongs to the KAE1 / TsaD family. Fe(2+) is required as a cofactor.

Its subcellular location is the cytoplasm. The enzyme catalyses L-threonylcarbamoyladenylate + adenosine(37) in tRNA = N(6)-L-threonylcarbamoyladenosine(37) in tRNA + AMP + H(+). In terms of biological role, required for the formation of a threonylcarbamoyl group on adenosine at position 37 (t(6)A37) in tRNAs that read codons beginning with adenine. Is involved in the transfer of the threonylcarbamoyl moiety of threonylcarbamoyl-AMP (TC-AMP) to the N6 group of A37, together with TsaE and TsaB. TsaD likely plays a direct catalytic role in this reaction. The sequence is that of tRNA N6-adenosine threonylcarbamoyltransferase from Pseudomonas putida (strain ATCC 47054 / DSM 6125 / CFBP 8728 / NCIMB 11950 / KT2440).